A 121-amino-acid polypeptide reads, in one-letter code: Small ribosomal subunit protein uS11 (121 aa).

This sequence belongs to the universal ribosomal protein uS11 family. In terms of assembly, part of the 30S ribosomal subunit. Interacts with proteins S7 and S18. Binds to IF-3.

In terms of biological role, located on the platform of the 30S subunit, it bridges several disparate RNA helices of the 16S rRNA. Forms part of the Shine-Dalgarno cleft in the 70S ribosome. This Mycoplasma genitalium (strain ATCC 33530 / DSM 19775 / NCTC 10195 / G37) (Mycoplasmoides genitalium) protein is Small ribosomal subunit protein uS11.